The following is a 105-amino-acid chain: Heat shock protein HspQ (105 aa).

The tract at residues 75 to 105 (GEAQEAHPEQPSLDELAESIRHQLQAPRLRN) is disordered.

Belongs to the HspQ family.

It is found in the cytoplasm. In terms of biological role, involved in the degradation of certain denaturated proteins, including DnaA, during heat shock stress. This Serratia proteamaculans (strain 568) protein is Heat shock protein HspQ.